The sequence spans 160 residues: S-ribosylhomocysteine lyase (160 aa).

Positions 57, 61, and 127 each coordinate Fe cation.

The protein belongs to the LuxS family. Homodimer. It depends on Fe cation as a cofactor.

The catalysed reaction is S-(5-deoxy-D-ribos-5-yl)-L-homocysteine = (S)-4,5-dihydroxypentane-2,3-dione + L-homocysteine. In terms of biological role, involved in the synthesis of autoinducer 2 (AI-2) which is secreted by bacteria and is used to communicate both the cell density and the metabolic potential of the environment. The regulation of gene expression in response to changes in cell density is called quorum sensing. Catalyzes the transformation of S-ribosylhomocysteine (RHC) to homocysteine (HC) and 4,5-dihydroxy-2,3-pentadione (DPD). In Streptococcus pyogenes serotype M2 (strain MGAS10270), this protein is S-ribosylhomocysteine lyase.